The following is a 542-amino-acid chain: Probable serine/threonine-protein kinase ndrB (542 aa).

Residues 1–52 are disordered; sequence MNVERKLESLSLQQQQQEEQQDESEQPNQGVEDEEEEEYDEEEYEEEEEDIN. The segment covering 9–18 has biased composition (low complexity); the sequence is SLSLQQQQQE. Positions 19 to 51 are enriched in acidic residues; the sequence is EQQDESEQPNQGVEDEEEEEYDEEEYEEEEEDI. One can recognise a Protein kinase domain in the interval 130 to 437; that stretch reads FESIRIIGRG…VEEIQSHPFF (308 aa). ATP contacts are provided by residues 136–144 and lysine 159; that span reads IGRGAFGEV. Aspartate 258 serves as the catalytic Proton acceptor. The AGC-kinase C-terminal domain occupies 438–510; that stretch reads KGVDWRRLRE…RNFDAMRDAF (73 aa). Residues 452–486 are disordered; sequence IIPQLSSPTDTSNFDHYEEEQQPEPMQPVQSKSRR. Polar residues predominate over residues 455-465; it reads QLSSPTDTSNF.

The protein belongs to the protein kinase superfamily. AGC Ser/Thr protein kinase family.

The protein localises to the cytoplasm. It carries out the reaction L-seryl-[protein] + ATP = O-phospho-L-seryl-[protein] + ADP + H(+). The enzyme catalyses L-threonyl-[protein] + ATP = O-phospho-L-threonyl-[protein] + ADP + H(+). The protein is Probable serine/threonine-protein kinase ndrB (ndrB) of Dictyostelium discoideum (Social amoeba).